The primary structure comprises 263 residues: Lens fiber major intrinsic protein (263 aa).

Topologically, residues 1–9 (MWEFRSFSF) are cytoplasmic. A helical transmembrane segment spans residues 10-29 (WRAVFAEFFGTMFYVFFGLG). The Extracellular portion of the chain corresponds to 30–41 (ASLKWAAGPANV). A helical membrane pass occupies residues 42-59 (LVIALAFGLVLATMVQSI). Topologically, residues 60-61 (GH) are cytoplasmic. The discontinuously helical intramembrane region spans 62-77 (VSGAHINPAVTFAFLI). Residues 68–70 (NPA) carry the NPA 1 motif. The Cytoplasmic portion of the chain corresponds to 78–82 (GSQMS). The helical transmembrane segment at 83–106 (LFRAIFYIAAQLLGAVAGAAVLYG) threads the bilayer. Over 107–127 (VTPAAIRGNLALNTLHPGVSL) the chain is Extracellular. The chain crosses the membrane as a helical span at residues 128–148 (GQATTVEIFLTLQFVLCIFAT). The Cytoplasmic segment spans residues 149-156 (YDERRNGR). The chain crosses the membrane as a helical span at residues 157-175 (LGSVSLAIGFSLTLGHLFG). Over 176 to 178 (LYY) the chain is Extracellular. Residues 179 to 193 (TGASMNPARSFAPAV) constitute an intramembrane region (discontinuously helical). Positions 184-186 (NPA) match the NPA 2 motif. The Extracellular portion of the chain corresponds to 194-200 (LTRNFTN). A helical membrane pass occupies residues 201–222 (HWVYWVGPIIGGALGGLVYDFI). Over 223–263 (LFPRMRGLSERLSILKGARPAEPEGQQEATGEPIELKTQSL) the chain is Cytoplasmic. Residues 227 to 237 (MRGLSERLSIL) are interaction with CALM. The segment at 241–263 (RPAEPEGQQEATGEPIELKTQSL) is disordered.

It belongs to the MIP/aquaporin (TC 1.A.8) family. As to quaternary structure, homotetramer; each monomer provides an independent water pore. Two homotetramers on opposing membranes can dimerize, forming a cell-cell junction. Interacts with CALM; the calcium-calmodulin/CALM complex interacts with the cytoplasmic domains of two aquaporins, leading to channel closure.

It is found in the cell membrane. The protein localises to the cell junction. It catalyses the reaction H2O(in) = H2O(out). Its activity is regulated as follows. The water channel activity is inhibited by calcium through calmodulin/CALM. Aquaporins form homotetrameric transmembrane channels, with each monomer independently mediating water transport across the plasma membrane along its osmotic gradient. Specifically expressed in lens fiber cells, this aquaporin is crucial for maintaining lens water homeostasis and transparency. Beyond water permeability, it also acts as a cell-to-cell adhesion molecule, forming thin junctions between lens fiber cells that are essential for maintaining the ordered structure and transparency of the lens. This Lithobates pipiens (Northern leopard frog) protein is Lens fiber major intrinsic protein.